A 194-amino-acid polypeptide reads, in one-letter code: Ferredoxin, apicoplast (194 aa).

Residues 1–19 constitute an apicoplast transit peptide; it reads MNIVILLLILTFSIKHSNT. Positions 99–189 constitute a 2Fe-2S ferredoxin-type domain; sequence YNITLRTNDG…DCVIETHKED (91 aa). Residues C135, C140, C143, and C173 each coordinate [2Fe-2S] cluster.

Belongs to the 2Fe2S plant-type ferredoxin family. [2Fe-2S] cluster is required as a cofactor.

It is found in the plastid. Its subcellular location is the apicoplast. Its function is as follows. Ferredoxins are iron-sulfur proteins that transfer electrons in a wide variety of metabolic reactions. By transferring electrons to 4-hydroxy-3-methylbut-2-enyl diphosphate reductase LytB/IspH, plays a role in the terminal step of the DOXP/MEP pathway for isoprenoid precursor biosynthesis. The protein is Ferredoxin, apicoplast of Plasmodium falciparum (isolate 3D7).